A 251-amino-acid polypeptide reads, in one-letter code: 1-(5-phosphoribosyl)-5-[(5-phosphoribosylamino)methylideneamino] imidazole-4-carboxamide isomerase (251 aa).

D8 serves as the catalytic Proton acceptor. D129 functions as the Proton donor in the catalytic mechanism.

The protein belongs to the HisA/HisF family.

It is found in the cytoplasm. The enzyme catalyses 1-(5-phospho-beta-D-ribosyl)-5-[(5-phospho-beta-D-ribosylamino)methylideneamino]imidazole-4-carboxamide = 5-[(5-phospho-1-deoxy-D-ribulos-1-ylimino)methylamino]-1-(5-phospho-beta-D-ribosyl)imidazole-4-carboxamide. The protein operates within amino-acid biosynthesis; L-histidine biosynthesis; L-histidine from 5-phospho-alpha-D-ribose 1-diphosphate: step 4/9. The sequence is that of 1-(5-phosphoribosyl)-5-[(5-phosphoribosylamino)methylideneamino] imidazole-4-carboxamide isomerase from Desulfosudis oleivorans (strain DSM 6200 / JCM 39069 / Hxd3) (Desulfococcus oleovorans).